The primary structure comprises 277 residues: Thymidylate synthase (277 aa).

Arginine 21 serves as a coordination point for dUMP. Histidine 51 serves as a coordination point for (6R)-5,10-methylene-5,6,7,8-tetrahydrofolate. 126 to 127 (RR) serves as a coordination point for dUMP. Cysteine 159 (nucleophile) is an active-site residue. DUMP contacts are provided by residues 179-182 (RSAD), asparagine 190, and 220-222 (HLY). Aspartate 182 lines the (6R)-5,10-methylene-5,6,7,8-tetrahydrofolate pocket. Alanine 276 is a binding site for (6R)-5,10-methylene-5,6,7,8-tetrahydrofolate.

Belongs to the thymidylate synthase family. Bacterial-type ThyA subfamily. Homodimer.

The protein resides in the cytoplasm. The catalysed reaction is dUMP + (6R)-5,10-methylene-5,6,7,8-tetrahydrofolate = 7,8-dihydrofolate + dTMP. Its pathway is pyrimidine metabolism; dTTP biosynthesis. In terms of biological role, catalyzes the reductive methylation of 2'-deoxyuridine-5'-monophosphate (dUMP) to 2'-deoxythymidine-5'-monophosphate (dTMP) while utilizing 5,10-methylenetetrahydrofolate (mTHF) as the methyl donor and reductant in the reaction, yielding dihydrofolate (DHF) as a by-product. This enzymatic reaction provides an intracellular de novo source of dTMP, an essential precursor for DNA biosynthesis. In Thioalkalivibrio sulfidiphilus (strain HL-EbGR7), this protein is Thymidylate synthase.